Reading from the N-terminus, the 89-residue chain is MFFKLVLVSAVAIQALSMSILKSNVKRDQKQLQPCQENQICHEVPNSKYEAPPLVHCLCTGGKRCPMDTSLAHKTTGSGDTLMYLFRCI.

The signal sequence occupies residues 1-17 (MFFKLVLVSAVAIQALS).

The protein belongs to the scoloptoxin-11 family. Contains 3 disulfide bonds. As to expression, expressed by the venom gland.

It is found in the secreted. The polypeptide is U-scoloptoxin(11)-Sm4a (Scolopendra morsitans (Tanzanian blue ringleg centipede)).